The sequence spans 610 residues: Sensor protein kinase WalK (610 aa).

2 helical membrane-spanning segments follow: residues 14 to 34 (LVIV…LYFT) and 184 to 204 (IFIV…FFIA). Positions 205 to 257 (RTITKPITDMRNQTVEMSKGNYTQRVKIYGNDEIGELALAFNNLSKRVQEAQA) constitute an HAMP domain. In terms of domain architecture, PAS spans 262–333 (EKRRLDSVIT…IQENNDSFLL (72 aa)). The PAC domain maps to 326-379 (ENNDSFLLDINENEGIIARVNFSTIVQETGFVTGYIAVLHDVTEQQQVERERRE). A Histidine kinase domain is found at 383–601 (NVSHELRTPL…SIFITLPCEV (219 aa)). His386 bears the Phosphohistidine; by autocatalysis mark.

Post-translationally, autophosphorylated.

The protein resides in the cell membrane. It carries out the reaction ATP + protein L-histidine = ADP + protein N-phospho-L-histidine.. Member of the two-component regulatory system WalK/WalR. WalK functions as a sensor protein kinase which is autophosphorylated at a histidine residue and transfers its phosphate group to WalR. This Staphylococcus saprophyticus subsp. saprophyticus (strain ATCC 15305 / DSM 20229 / NCIMB 8711 / NCTC 7292 / S-41) protein is Sensor protein kinase WalK (walK).